Reading from the N-terminus, the 562-residue chain is Zinc finger protein 579 (562 aa).

A compositionally biased stretch (pro residues) spans 1–11 (MDPQPPPPAQG). The disordered stretch occupies residues 1–43 (MDPQPPPPAQGSPPHRGRGRGRGRGRGRGRGRGRGGAGAPRAP). Positions 15 to 33 (HRGRGRGRGRGRGRGRGRG) are enriched in basic residues. 3 C2H2-type zinc fingers span residues 44 to 66 (LPCPTCGRLFRFPYYLSRHRLSH), 72 to 94 (HACPLCPKAFRRPAHLSRHLRGH), and 100 to 123 (LRCAACPRTFPEPAQLRRHLAQEH). Position 92 is an omega-N-methylarginine (R92). Residues 139 to 203 (TAEPSWGPQD…SESEEAEAGA (65 aa)) form a disordered region. A phosphoserine mark is found at S194 and S196. C2H2-type zinc fingers lie at residues 270–292 (HQCSICLKAFARPWSLSRHRLVH) and 298–320 (FVCPDCGLAFRLASYLRQHRRVH). The interval 327 to 379 (APLPAAGKKDDKASGARNSAKGPEGGEGAECGGASEGGEGQNGGDAAPARPPA) is disordered. Over residues 349 to 369 (PEGGEGAECGGASEGGEGQNG) the composition is skewed to gly residues. 3 consecutive C2H2-type zinc fingers follow at residues 384-406 (FWCPECGKGFRRRAHLRQHGVTH), 412-434 (FQCVRCQREFKRLADLARHAQVH), and 441-463 (HPCPRCPRRFSRAYSLLRHQRCH). Residues 477 to 562 (QAQAPTSPPP…HLRGLGGLAS (86 aa)) are disordered. Composition is skewed to pro residues over residues 482–491 (TSPPPPPPPL) and 512–525 (PSPGTPPQSPPAPP). S483 bears the Phosphoserine mark.

Belongs to the krueppel C2H2-type zinc-finger protein family.

Its subcellular location is the nucleus. May be involved in transcriptional regulation. In Homo sapiens (Human), this protein is Zinc finger protein 579 (ZNF579).